Consider the following 146-residue polypeptide: NADH-quinone oxidoreductase subunit A (146 aa).

Transmembrane regions (helical) follow at residues 16-36 (FAIF…GGWF), 68-88 (FYLV…LFAW), and 98-118 (VGFV…VYLV).

It belongs to the complex I subunit 3 family. In terms of assembly, NDH-1 is composed of 13 different subunits. Subunits NuoA, H, J, K, L, M, N constitute the membrane sector of the complex.

Its subcellular location is the cell inner membrane. It catalyses the reaction a quinone + NADH + 5 H(+)(in) = a quinol + NAD(+) + 4 H(+)(out). Functionally, NDH-1 shuttles electrons from NADH, via FMN and iron-sulfur (Fe-S) centers, to quinones in the respiratory chain. The immediate electron acceptor for the enzyme in this species is believed to be ubiquinone. Couples the redox reaction to proton translocation (for every two electrons transferred, four hydrogen ions are translocated across the cytoplasmic membrane), and thus conserves the redox energy in a proton gradient. This chain is NADH-quinone oxidoreductase subunit A, found in Enterobacter sp. (strain 638).